A 1241-amino-acid polypeptide reads, in one-letter code: DNA-directed RNA polymerase subunit beta (1241 aa).

It belongs to the RNA polymerase beta chain family. In terms of assembly, the RNAP catalytic core consists of 2 alpha, 1 beta, 1 beta' and 1 omega subunit. When a sigma factor is associated with the core the holoenzyme is formed, which can initiate transcription.

It catalyses the reaction RNA(n) + a ribonucleoside 5'-triphosphate = RNA(n+1) + diphosphate. Its function is as follows. DNA-dependent RNA polymerase catalyzes the transcription of DNA into RNA using the four ribonucleoside triphosphates as substrates. In Clostridium botulinum (strain Alaska E43 / Type E3), this protein is DNA-directed RNA polymerase subunit beta.